The chain runs to 483 residues: MARAIMFQGTGSDVGKSVLVAGLCRVARNRGLKVRPFKPQNMSNNAAVSDDGGEIGRAQWLQALACGVPSSVHMNPVLLKPQTDMGSQLIVQGQVRGEARGRYYQELKPQLMAAVMESFAKVGDGADLVLVEGAGSPAEINLRAGDIANMGFATHADVPVVLVGDIDRGGVIASLVGTHTILPQEDRAMVRGFLINKFRGDISLFDDGLAAITRFTGWRSFGVVPWLKAVSRLPAEDSVILERAVRGDKKALIVAVPMLPRIANFDDLDPLKAEPAVEVVMVPPGSSLPADAGLVVLPGTKSTIADLLALRENGWDRELVAHVKRGGHVLGICGGFQMLGRRISDPAGIEGNVRDIEGLGLLDIETMMEPEKVVRNVEAVSLLHDEPLEGYEIHIGRTSGPDMARPFARIGDHDDGAVSPDGRIMGTYLHGVFSADRFRHHFLRALGVEGGQMNYRESVEEALDELAEGLEASLDIDGLFALA.

The region spanning 251 to 438 is the GATase cobBQ-type domain; the sequence is ALIVAVPMLP…LHGVFSADRF (188 aa). Cys-333 serves as the catalytic Nucleophile. His-430 is a catalytic residue.

The protein belongs to the CobB/CobQ family. CobQ subfamily.

It participates in cofactor biosynthesis; adenosylcobalamin biosynthesis. Functionally, catalyzes amidations at positions B, D, E, and G on adenosylcobyrinic A,C-diamide. NH(2) groups are provided by glutamine, and one molecule of ATP is hydrogenolyzed for each amidation. The sequence is that of Cobyric acid synthase from Brucella canis (strain ATCC 23365 / NCTC 10854 / RM-666).